Consider the following 67-residue polypeptide: Protein AaeX (67 aa).

Transmembrane regions (helical) follow at residues 3 to 23 (LLPV…ELLI) and 39 to 59 (GIYE…CCLF).

It belongs to the AaeX family.

It localises to the cell membrane. The sequence is that of Protein AaeX from Yersinia pseudotuberculosis serotype O:1b (strain IP 31758).